Here is a 231-residue protein sequence, read N- to C-terminus: Probable septum site-determining protein MinC (231 aa).

The interval 101 to 125 is disordered; sequence GKEKAPRPAPTPQAPAQNTTPVTKT. The segment covering 114 to 123 has biased composition (low complexity); that stretch reads APAQNTTPVT.

The protein belongs to the MinC family. As to quaternary structure, interacts with MinD and FtsZ.

In terms of biological role, cell division inhibitor that blocks the formation of polar Z ring septums. Rapidly oscillates between the poles of the cell to destabilize FtsZ filaments that have formed before they mature into polar Z rings. Prevents FtsZ polymerization. The chain is Probable septum site-determining protein MinC from Escherichia coli (strain ATCC 8739 / DSM 1576 / NBRC 3972 / NCIMB 8545 / WDCM 00012 / Crooks).